Here is a 589-residue protein sequence, read N- to C-terminus: Probable translation initiation factor IF-2 (589 aa).

The region spanning 5 to 219 (IRTPIVCVLG…IMIGLAQRYL (215 aa)) is the tr-type G domain. The segment at 14–21 (GHVDHGKT) is G1. 14–21 (GHVDHGKT) serves as a coordination point for GTP. The interval 39-43 (AITQH) is G2. The G3 stretch occupies residues 75–78 (DTPG). Residues 75–79 (DTPGH) and 129–132 (TKLD) contribute to the GTP site. Residues 129 to 132 (TKLD) form a G4 region. The segment at 197 to 199 (SSM) is G5.

This sequence belongs to the TRAFAC class translation factor GTPase superfamily. Classic translation factor GTPase family. IF-2 subfamily.

Its function is as follows. Function in general translation initiation by promoting the binding of the formylmethionine-tRNA to ribosomes. Seems to function along with eIF-2. In Methanocorpusculum labreanum (strain ATCC 43576 / DSM 4855 / Z), this protein is Probable translation initiation factor IF-2.